A 319-amino-acid polypeptide reads, in one-letter code: Probable NAD(P)H-dependent D-xylose reductase xyl1 (319 aa).

The active-site Proton donor is tyrosine 50. Substrate is bound at residue histidine 112. NAD(+) is bound by residues serine 166 to asparagine 167, serine 215 to glutamate 224, and lysine 271 to asparagine 281.

This sequence belongs to the aldo/keto reductase family.

The enzyme catalyses xylitol + NAD(+) = D-xylose + NADH + H(+). The catalysed reaction is xylitol + NADP(+) = D-xylose + NADPH + H(+). The protein operates within carbohydrate metabolism; D-xylose degradation. In terms of biological role, catalyzes the initial reaction in the xylose utilization pathway by reducing D-xylose into xylitol. Xylose is a major component of hemicelluloses such as xylan. Most fungi utilize D-xylose via three enzymatic reactions, xylose reductase (XR), xylitol dehydrogenase (XDH), and xylulokinase, to form xylulose 5-phosphate, which enters pentose phosphate pathway. In Emericella nidulans (strain FGSC A4 / ATCC 38163 / CBS 112.46 / NRRL 194 / M139) (Aspergillus nidulans), this protein is Probable NAD(P)H-dependent D-xylose reductase xyl1 (xyl1).